The sequence spans 118 residues: NILQFRKMIQCANKGSRAAWHYLDYGCYCGPGGRGTPVDELDRCCKIHDDCYIEAGKDGCYPKLTWYSWDCTGDAPTCNPKSKCKDFVCACDAAAAKCFAKAPYNKANWNIDTKTRCK.

Intrachain disulfides connect Cys11–Cys71, Cys27–Cys117, Cys29–Cys45, Cys44–Cys98, Cys51–Cys91, Cys60–Cys84, and Cys78–Cys89. The Ca(2+) site is built by Tyr28, Gly30, and Gly32. The active site involves His48. Asp49 contacts Ca(2+). The active site involves Asp92.

This sequence belongs to the phospholipase A2 family. Group I subfamily. D49 sub-subfamily. Ca(2+) is required as a cofactor. As to expression, expressed by the venom gland.

The protein localises to the secreted. The catalysed reaction is a 1,2-diacyl-sn-glycero-3-phosphocholine + H2O = a 1-acyl-sn-glycero-3-phosphocholine + a fatty acid + H(+). In terms of biological role, PLA2 catalyzes the calcium-dependent hydrolysis of the 2-acyl groups in 3-sn-phosphoglycerides. The polypeptide is Basic phospholipase A2 PA-13 (Pseudechis australis (Mulga snake)).